A 186-amino-acid polypeptide reads, in one-letter code: Ribosome-recycling factor (186 aa).

Belongs to the RRF family.

The protein localises to the cytoplasm. Its function is as follows. Responsible for the release of ribosomes from messenger RNA at the termination of protein biosynthesis. May increase the efficiency of translation by recycling ribosomes from one round of translation to another. In Rhizobium leguminosarum bv. trifolii (strain WSM2304), this protein is Ribosome-recycling factor.